A 145-amino-acid polypeptide reads, in one-letter code: Leghemoglobin (145 aa).

One can recognise a Globin domain in the interval 3–145 (GFTEKQEALV…ELAAALKKAF (143 aa)). Residues Tyr26 and Tyr31 each carry the nitrated tyrosine modification. His62 lines the O2 pocket. Lys65, His93, and Lys96 together coordinate heme b. The residue at position 134 (Tyr134) is a Nitrated tyrosine.

The protein belongs to the plant globin family. In terms of assembly, monomer. Post-translationally, nitrated in effective nodules and particularly in hypoxic conditions; this mechanism may play a protective role in the symbiosis by buffering toxic peroxynitrite NO(2)(-). Nitration level decrease during nodule senescence. In terms of tissue distribution, root nodules.

The protein localises to the cytoplasm. Its subcellular location is the cytosol. It is found in the nucleus. Leghemoglobin that reversibly binds oxygen O(2) through a pentacoordinated heme iron. In root nodules, facilitates the diffusion of oxygen to the bacteroids while preventing the bacterial nitrogenase from being inactivated by buffering dioxygen, nitric oxide and carbon monoxide, and promoting the formation of reactive oxygen species (ROS, e.g. H(2)O(2)). This role is essential for symbiotic nitrogen fixation (SNF). This chain is Leghemoglobin, found in Psophocarpus tetragonolobus (Winged bean).